We begin with the raw amino-acid sequence, 144 residues long: Large ribosomal subunit protein eL27 (144 aa).

The 38-residue stretch at 6–43 folds into the KOW domain; that stretch reads IKPGRLVILLNGKYAGRKAVVIKTFDDATASKSRPYGH.

This sequence belongs to the eukaryotic ribosomal protein eL27 family.

This Dictyostelium discoideum (Social amoeba) protein is Large ribosomal subunit protein eL27 (rpl27).